Here is a 312-residue protein sequence, read N- to C-terminus: Olfactory receptor 2T8 (312 aa).

Over 1–26 the chain is Extracellular; the sequence is MENGSYTSYFILLGLFNHTRAHQVLF. 2 N-linked (GlcNAc...) asparagine glycosylation sites follow: Asn-3 and Asn-17. A helical transmembrane segment spans residues 27–47; it reads MMVLSIVLTSLFGNSLMILLI. At 48-55 the chain is on the cytoplasmic side; it reads HWDHRLHT. Residues 56–76 form a helical membrane-spanning segment; sequence PMYFLLSQLSLMDVMLVSTTV. Residues 77 to 96 lie on the Extracellular side of the membrane; that stretch reads PKMAADYLTGSKAISRAGCG. A disulfide bridge connects residues Cys-95 and Cys-177. Residues 97–117 traverse the membrane as a helical segment; it reads AQIFFLPTLGGGECFLLAAMA. Residues 118-143 lie on the Cytoplasmic side of the membrane; it reads YDRYAAVCHPLRYPTLMSWQLCLRMN. The chain crosses the membrane as a helical span at residues 144–164; sequence LSCWLLGAADGLLQAVATLSF. At 165–201 the chain is on the extracellular side; the sequence is PYCGAHEIDHFFCETPVLVRLACADTSVFENAMYICC. A helical transmembrane segment spans residues 202-222; it reads VLMLLVPFSLILSSYGLILAA. The Cytoplasmic portion of the chain corresponds to 223 to 234; it reads VLHMRSTEARKK. Residues 235-255 traverse the membrane as a helical segment; sequence AFATCSSHVAVVGLFYGAAIF. Topologically, residues 256 to 269 are extracellular; the sequence is TYMRPKSHRSTNHD. Residues 270–290 form a helical membrane-spanning segment; the sequence is KVVSAFYTMFTPLLNPLIYSV. The Cytoplasmic portion of the chain corresponds to 291-312; sequence KNSEVKGALTRCMGRCVALSRE.

The protein belongs to the G-protein coupled receptor 1 family.

The protein localises to the cell membrane. In terms of biological role, odorant receptor. In Homo sapiens (Human), this protein is Olfactory receptor 2T8 (OR2T8).